Reading from the N-terminus, the 145-residue chain is Large ribosomal subunit protein uL13 (145 aa).

It belongs to the universal ribosomal protein uL13 family. In terms of assembly, part of the 50S ribosomal subunit.

Functionally, this protein is one of the early assembly proteins of the 50S ribosomal subunit, although it is not seen to bind rRNA by itself. It is important during the early stages of 50S assembly. The chain is Large ribosomal subunit protein uL13 from Listeria monocytogenes serotype 4b (strain CLIP80459).